The primary structure comprises 143 residues: Protein RJ1 (143 aa).

The first 26 residues, 1–26 (MARVMTRGMARVSTLATVRVSTLARA), serve as a signal peptide directing secretion.

This Human herpesvirus 6A (strain Uganda-1102) (HHV-6 variant A) protein is Protein RJ1 (RJ1).